We begin with the raw amino-acid sequence, 185 residues long: DNA-directed RNA polymerase 21 kDa subunit (185 aa).

The protein belongs to the poxviridae DNA-directed RNA polymerase 22 kDa subunit family. In terms of assembly, the DNA-dependent RNA polymerase used for intermediate and late genes expression consists of eight subunits Rpo30/OPG66, Rpo7/OPG90, Rpo22/OPG103, Rpo147/OPG105, Rpo18/OPG119, Rpo19/OPG131, Rpo132/OPG151 and Rpo35/OPG156. The same holoenzyme, with the addition of the transcription-specificity factor OPG109, is used for early gene expression.

It is found in the virion. It catalyses the reaction RNA(n) + a ribonucleoside 5'-triphosphate = RNA(n+1) + diphosphate. Part of the DNA-dependent RNA polymerase which catalyzes the transcription of viral DNA into RNA using the four ribonucleoside triphosphates as substrates. Responsible for the transcription of early, intermediate and late genes. DNA-dependent RNA polymerase associates with the early transcription factor (ETF), itself composed of OPG118 and OPG133, thereby allowing the early genes transcription. Late transcription, and probably also intermediate transcription, require newly synthesized RNA polymerase. The sequence is that of DNA-directed RNA polymerase 21 kDa subunit (OPG103) from Oryctolagus cuniculus (Rabbit).